The sequence spans 941 residues: Isoleucine--tRNA ligase (941 aa).

Positions 59–69 match the 'HIGH' region motif; the sequence is PYANGNIHIGH. Glutamate 562 provides a ligand contact to L-isoleucyl-5'-AMP. The 'KMSKS' region signature appears at 603 to 607; it reads KMSKS. Residue lysine 606 participates in ATP binding. 4 residues coordinate Zn(2+): cysteine 904, cysteine 907, cysteine 924, and cysteine 927.

This sequence belongs to the class-I aminoacyl-tRNA synthetase family. IleS type 1 subfamily. As to quaternary structure, monomer. Zn(2+) serves as cofactor.

The protein localises to the cytoplasm. The catalysed reaction is tRNA(Ile) + L-isoleucine + ATP = L-isoleucyl-tRNA(Ile) + AMP + diphosphate. Its function is as follows. Catalyzes the attachment of isoleucine to tRNA(Ile). As IleRS can inadvertently accommodate and process structurally similar amino acids such as valine, to avoid such errors it has two additional distinct tRNA(Ile)-dependent editing activities. One activity is designated as 'pretransfer' editing and involves the hydrolysis of activated Val-AMP. The other activity is designated 'posttransfer' editing and involves deacylation of mischarged Val-tRNA(Ile). The protein is Isoleucine--tRNA ligase of Haemophilus influenzae (strain PittGG).